The primary structure comprises 256 residues: 1-(5-phosphoribosyl)-5-[(5-phosphoribosylamino)methylideneamino] imidazole-4-carboxamide isomerase (256 aa).

D8 functions as the Proton acceptor in the catalytic mechanism. D129 serves as the catalytic Proton donor.

Belongs to the HisA/HisF family.

The protein localises to the cytoplasm. The enzyme catalyses 1-(5-phospho-beta-D-ribosyl)-5-[(5-phospho-beta-D-ribosylamino)methylideneamino]imidazole-4-carboxamide = 5-[(5-phospho-1-deoxy-D-ribulos-1-ylimino)methylamino]-1-(5-phospho-beta-D-ribosyl)imidazole-4-carboxamide. It functions in the pathway amino-acid biosynthesis; L-histidine biosynthesis; L-histidine from 5-phospho-alpha-D-ribose 1-diphosphate: step 4/9. The polypeptide is 1-(5-phosphoribosyl)-5-[(5-phosphoribosylamino)methylideneamino] imidazole-4-carboxamide isomerase (Prochlorococcus marinus (strain NATL1A)).